The primary structure comprises 396 residues: Obg-like ATPase 1 (396 aa).

In terms of domain architecture, OBG-type G spans 23 to 283 (LKIGIVGLPN…LSAEERQKYL (261 aa)). Residue 32–37 (NVGKST) coordinates ATP. Mg(2+)-binding residues include serine 36 and threonine 56. Leucine 231 is an ATP binding site. The Nuclear export signal motif lies at 267–274 (LELKLQEL). At lysine 294 the chain carries N6-acetyllysine. Positions 304–387 (QLEYFFTAGP…EDGDIIFFKF (84 aa)) constitute a TGS domain.

The protein belongs to the TRAFAC class OBG-HflX-like GTPase superfamily. OBG GTPase family. YchF/OLA1 subfamily. Monomer. Mg(2+) is required as a cofactor.

The protein resides in the cytoplasm. The protein localises to the nucleus. Its subcellular location is the nucleolus. In terms of biological role, hydrolyzes ATP, and can also hydrolyze GTP with lower efficiency. Has lower affinity for GTP. In Pongo abelii (Sumatran orangutan), this protein is Obg-like ATPase 1.